The chain runs to 338 residues: Homeobox protein ceh-20 (338 aa).

In terms of domain architecture, PBC spans 4 to 187; that stretch reads THPANLSELL…VMILRSRFLD (184 aa). A PBC-A region spans residues 11–91; the sequence is ELLDAVLKIN…EGVAGPDKGG (81 aa). Positions 94–187 are PBC-B; the sequence is GSDASGGDQA…VMILRSRFLD (94 aa). Residues 188-250 constitute a DNA-binding region (homeobox; TALE-type); the sequence is ARRKRRNFSK…NKRIRYKKNM (63 aa).

Belongs to the TALE/PBX homeobox family. In terms of assembly, interacts with Meis protein psa-3. Interacts with homeobox protein nob-1. As to expression, expressed in head dopaminergic neurons.

It localises to the nucleus. In terms of biological role, transcription factor that binds to the 5'-TGATNNAT(G/T)(G/A)-3' PBC/Hox lineage enhancer region of sem-2 to promote cell fate specification in the postembryonic mesoderm (also known as the M lineage). Required for the M lineage-specific expression of the transcription factor, mls-2. Required for asymmetric division of the T hypodermal cell, probably acting via the regulation of asymmetric expression of Meis protein psa-3 in concert with homeobox protein nob-1 and the Wnt-MAPK pathway. Has a role in the mig-13 pathway to promote the guidance, migration and positioning of Q neuroblasts and their descendants along the anteroposterior body axis and the anterior migration of BDU interneurons. Also required for normal vulval formation. Plays a role in regulating gene expression in dopaminergic neurons, acting in midbody PDE neurons, and acting redundantly with ceh-40 in head neurons. May activate dopamine pathway genes in concert with ETS domain-containing protein ast-1, and homeobox proteins ceh-43 and ceh-40. The sequence is that of Homeobox protein ceh-20 from Caenorhabditis elegans.